The primary structure comprises 195 residues: N-terminal acetyltransferase B complex catalytic subunit NAT3 (195 aa).

One can recognise an N-acetyltransferase domain in the interval 2–172 (TTIQPFEPVD…DAFDMRKAMA (171 aa)).

It belongs to the acetyltransferase family. GNAT subfamily. In terms of assembly, component of the N-terminal acetyltransferase B (NatB) complex, which is composed of NAT3 and MDM20.

The protein localises to the cytoplasm. It catalyses the reaction N-terminal L-methionyl-L-asparaginyl-[protein] + acetyl-CoA = N-terminal N(alpha)-acetyl-L-methionyl-L-asparaginyl-[protein] + CoA + H(+). It carries out the reaction N-terminal L-methionyl-L-glutaminyl-[protein] + acetyl-CoA = N-terminal N(alpha)-acetyl-L-methionyl-L-glutaminyl-[protein] + CoA + H(+). The catalysed reaction is N-terminal L-methionyl-L-aspartyl-[protein] + acetyl-CoA = N-terminal N(alpha)-acetyl-L-methionyl-L-aspartyl-[protein] + CoA + H(+). The enzyme catalyses N-terminal L-methionyl-L-glutamyl-[protein] + acetyl-CoA = N-terminal N(alpha)-acetyl-L-methionyl-L-glutamyl-[protein] + CoA + H(+). Catalytic subunit of the NatB N-terminal acetyltransferase, which catalyzes acetylation of the amino-terminal methionine residues of all proteins beginning with Met-Asp or Met-Glu and of some proteins beginning with Met-Asn, Met-Gln or Met-Met. NatB acetylates TPM1 protein and regulates tropomyocin-actin interactions, it is presumed to N-acetylate 15% of all yeast proteins. This Saccharomyces cerevisiae (strain ATCC 204508 / S288c) (Baker's yeast) protein is N-terminal acetyltransferase B complex catalytic subunit NAT3.